A 775-amino-acid polypeptide reads, in one-letter code: Chloride channel protein CLC-a (775 aa).

A disordered region spans residues 1–28 (MDEDGNLQISNSNYNGEEEGEDPENNTL). The next 12 membrane-spanning stretches (helical) occupy residues 88–108 (TLACLVGLFTGLIATLINLAV), 131–151 (GLMVFTGANLGLTLVATVLVV), 178–198 (FGFTTMMVKIVGSIGAVAAGL), 206–226 (LVHIGSCIASLLGQGGPDNHR), 248–268 (GSASGVCAAFRSPVGGVLFAL), 278–298 (ALLWRTFFSTAVVVVVLRAFI), 328–348 (AADIIPVTLIGVFGGILGSLY), 371–391 (VLLSLGVSLFTSVCLFGLPFL), 453–473 (MVSLWIFFGLYCILGLITFGI), 478–498 (GLFLPIILMGSAYGRMLGTAM), 510–530 (AVLGAASLMAGSMRMTVSLCV), and 531–551 (IFLELTNNLLLLPITMFVLLI). 2 CBS domains span residues 595 to 658 (AKPP…FLNE) and 703 to 768 (TNTT…HLDK). A helical transmembrane segment spans residues 730–750 (HLLVVPKIQASGMSPVIGILT).

It belongs to the chloride channel (TC 2.A.49) family. In terms of assembly, homodimer. Interacts with PP2A5. In terms of tissue distribution, broadly expressed in the plant.

Its subcellular location is the membrane. In terms of biological role, voltage-gated chloride channel that could play a role in the regulation of nitrate content. The protein is Chloride channel protein CLC-a (CLC-A) of Arabidopsis thaliana (Mouse-ear cress).